The sequence spans 43 residues: Protein PsbN (43 aa).

A helical membrane pass occupies residues 7–27 (LIVFIASLLLGVTGYSVYTAF).

The protein belongs to the PsbN family.

Its subcellular location is the plastid. It localises to the chloroplast thylakoid membrane. Functionally, may play a role in photosystem I and II biogenesis. This chain is Protein PsbN, found in Rhodomonas salina (Cryptomonas salina).